The primary structure comprises 891 residues: DNA mismatch repair protein MutS (891 aa).

634–641 serves as a coordination point for ATP; it reads GPNMGGKS.

Belongs to the DNA mismatch repair MutS family.

This protein is involved in the repair of mismatches in DNA. It is possible that it carries out the mismatch recognition step. This protein has a weak ATPase activity. The chain is DNA mismatch repair protein MutS from Burkholderia pseudomallei (strain 668).